An 86-amino-acid chain; its full sequence is Cell division topological specificity factor (86 aa).

This sequence belongs to the MinE family.

Its function is as follows. Prevents the cell division inhibition by proteins MinC and MinD at internal division sites while permitting inhibition at polar sites. This ensures cell division at the proper site by restricting the formation of a division septum at the midpoint of the long axis of the cell. The polypeptide is Cell division topological specificity factor (Azoarcus sp. (strain BH72)).